Consider the following 442-residue polypeptide: Exodeoxyribonuclease 7 large subunit (442 aa).

Belongs to the XseA family. In terms of assembly, heterooligomer composed of large and small subunits.

The protein resides in the cytoplasm. It catalyses the reaction Exonucleolytic cleavage in either 5'- to 3'- or 3'- to 5'-direction to yield nucleoside 5'-phosphates.. Bidirectionally degrades single-stranded DNA into large acid-insoluble oligonucleotides, which are then degraded further into small acid-soluble oligonucleotides. The sequence is that of Exodeoxyribonuclease 7 large subunit from Shewanella loihica (strain ATCC BAA-1088 / PV-4).